We begin with the raw amino-acid sequence, 312 residues long: UDP-N-acetylenolpyruvoylglucosamine reductase (312 aa).

The 183-residue stretch at 24–206 (GIGGPADLFA…SADILKVRNE (183 aa)) folds into the FAD-binding PCMH-type domain. The active site involves Arg-166. The Proton donor role is filled by Ser-217. Glu-307 is a catalytic residue.

Belongs to the MurB family. FAD serves as cofactor.

The protein localises to the cytoplasm. The enzyme catalyses UDP-N-acetyl-alpha-D-muramate + NADP(+) = UDP-N-acetyl-3-O-(1-carboxyvinyl)-alpha-D-glucosamine + NADPH + H(+). It functions in the pathway cell wall biogenesis; peptidoglycan biosynthesis. Functionally, cell wall formation. The chain is UDP-N-acetylenolpyruvoylglucosamine reductase from Solibacter usitatus (strain Ellin6076).